We begin with the raw amino-acid sequence, 357 residues long: Homoserine kinase (357 aa).

Lys133 participates in a covalent cross-link: Glycyl lysine isopeptide (Lys-Gly) (interchain with G-Cter in ubiquitin).

Belongs to the GHMP kinase family. Homoserine kinase subfamily. Homodimer.

It carries out the reaction L-homoserine + ATP = O-phospho-L-homoserine + ADP + H(+). Its pathway is amino-acid biosynthesis; L-threonine biosynthesis; L-threonine from L-aspartate: step 4/5. In terms of biological role, commits homoserine to the threonine biosynthesis pathway by catalyzing its O-phosphorylation. The protein is Homoserine kinase (THR1) of Saccharomyces cerevisiae (strain ATCC 204508 / S288c) (Baker's yeast).